The sequence spans 202 residues: Large ribosomal subunit protein bL25 (202 aa).

Residues 180-202 form a disordered region; it reads PKQEAFEEDAEPSPGEEPEGENQ. The segment covering 185 to 202 has biased composition (acidic residues); the sequence is FEEDAEPSPGEEPEGENQ.

It belongs to the bacterial ribosomal protein bL25 family. CTC subfamily. As to quaternary structure, part of the 50S ribosomal subunit; part of the 5S rRNA/L5/L18/L25 subcomplex. Contacts the 5S rRNA. Binds to the 5S rRNA independently of L5 and L18.

In terms of biological role, this is one of the proteins that binds to the 5S RNA in the ribosome where it forms part of the central protuberance. The protein is Large ribosomal subunit protein bL25 of Bacillus velezensis (strain DSM 23117 / BGSC 10A6 / LMG 26770 / FZB42) (Bacillus amyloliquefaciens subsp. plantarum).